Reading from the N-terminus, the 302-residue chain is Merozoite surface protein 2 (302 aa).

Residues 1–20 (MKVIKTLSIINFFIFVTFNI) form the signal peptide. N-linked (GlcNAc...) asparagine glycans are attached at residues Asn-22 and Asn-36. The tract at residues 44–228 (EESKPPTGAV…EQTESPELQS (185 aa)) is polymorphic region. One copy of the 1; partial repeat lies at 55 to 60 (GSGAGA). Positions 55-113 (GSGAGAGSGAGAVAGSGAGAVAGSGAGAVAGSGAGAVAGSGAGAVAGSGAGAVAGSGAG) are 8 X 8 AA tandem repeats of G-S-G-A-G-A-V-A. 6 consecutive repeat copies span residues 61 to 68 (GSGAGAVA), 69 to 76 (GSGAGAVA), 77 to 84 (GSGAGAVA), 85 to 92 (GSGAGAVA), 93 to 100 (GSGAGAVA), and 101 to 108 (GSGAGAVA). One copy of the 8; partial repeat lies at 109–113 (GSGAG). Residues 114–263 (NGANPGADAE…DSQKECTDGN (150 aa)) form a disordered region. Positions 125-150 (SPSTPATTTTTTTTNDAEASTSTSSE) are enriched in low complexity. Over residues 151–167 (NRNHNNAETNPKGKGEV) the composition is skewed to basic and acidic residues. Polar residues-rich tracts occupy residues 169 to 195 (KPNQ…NVPR) and 202 to 230 (KSPT…QSAP). N-linked (GlcNAc...) asparagine glycosylation is present at Asn-179. The N-linked (GlcNAc...) asparagine glycan is linked to Asn-251. Residues Cys-259 and Cys-267 are joined by a disulfide bond. 2 N-linked (GlcNAc...) asparagine glycosylation sites follow: Asn-275 and Asn-276. Asn-276 carries GPI-anchor amidated asparagine lipidation. The propeptide at 277 to 302 (SSNIASINKFVVLISATLVLSFAIFI) is removed in mature form.

The protein localises to the cell membrane. In terms of biological role, may play a role in the merozoite attachment to the erythrocyte. The sequence is that of Merozoite surface protein 2 from Plasmodium falciparum (isolate tak 9).